A 360-amino-acid polypeptide reads, in one-letter code: Phenylalanine--tRNA ligase alpha subunit (360 aa).

Glutamate 260 contacts Mg(2+).

It belongs to the class-II aminoacyl-tRNA synthetase family. Phe-tRNA synthetase alpha subunit type 1 subfamily. Tetramer of two alpha and two beta subunits. It depends on Mg(2+) as a cofactor.

It localises to the cytoplasm. It catalyses the reaction tRNA(Phe) + L-phenylalanine + ATP = L-phenylalanyl-tRNA(Phe) + AMP + diphosphate + H(+). This Bartonella tribocorum (strain CIP 105476 / IBS 506) protein is Phenylalanine--tRNA ligase alpha subunit.